The sequence spans 800 residues: Phenylalanine--tRNA ligase beta subunit (800 aa).

Residues 39–154 form the tRNA-binding domain; that stretch reads TKDIKNLVVG…ESQVPGTDAL (116 aa). The region spanning 408–483 is the B5 domain; sequence AFITPIDITA…RIYGYDDIPS (76 aa). 4 residues coordinate Mg(2+): D461, D467, E470, and E471. An FDX-ACB domain is found at 708-800; it reads PRFPGMSRDI…ALIEQGAVIR (93 aa).

The protein belongs to the phenylalanyl-tRNA synthetase beta subunit family. Type 1 subfamily. As to quaternary structure, tetramer of two alpha and two beta subunits. Mg(2+) is required as a cofactor.

The protein localises to the cytoplasm. The enzyme catalyses tRNA(Phe) + L-phenylalanine + ATP = L-phenylalanyl-tRNA(Phe) + AMP + diphosphate + H(+). The chain is Phenylalanine--tRNA ligase beta subunit from Staphylococcus aureus.